The sequence spans 308 residues: Cysteine proteinase 3 (308 aa).

Positions 1–13 are cleaved as a signal peptide; sequence MFALILFVSLACA. Positions 14-92 are cleaved as a propeptide — activation peptide; that stretch reads NEVAFKQWAA…TSNVKAAVKA (79 aa). Intrachain disulfides connect Cys-112–Cys-153 and Cys-146–Cys-186. Residue Cys-115 is part of the active site. Catalysis depends on residues His-251 and Asn-271.

Belongs to the peptidase C1 family.

It is found in the cytoplasm. The protein resides in the cytoplasmic vesicle. The protein localises to the phagosome. The catalysed reaction is Hydrolysis of proteins, including basement membrane collagen and azocasein. Preferential cleavage: Arg-Arg-|-Xaa in small molecule substrates including Z-Arg-Arg-|-NHMec.. In terms of biological role, cysteine protease which may be involved in pathogenicity. The sequence is that of Cysteine proteinase 3 from Entamoeba histolytica (strain ATCC 30459 / HM-1:IMSS / ABRM).